Here is a 184-residue protein sequence, read N- to C-terminus: Elongation factor P (184 aa).

The protein belongs to the elongation factor P family.

It localises to the cytoplasm. It participates in protein biosynthesis; polypeptide chain elongation. Involved in peptide bond synthesis. Stimulates efficient translation and peptide-bond synthesis on native or reconstituted 70S ribosomes in vitro. Probably functions indirectly by altering the affinity of the ribosome for aminoacyl-tRNA, thus increasing their reactivity as acceptors for peptidyl transferase. This chain is Elongation factor P, found in Paracidovorax citrulli (strain AAC00-1) (Acidovorax citrulli).